Reading from the N-terminus, the 248-residue chain is Neurovirulence factor ICP34.5 (248 aa).

Basic residues predominate over residues 1–14 (MARRRRHRGPRRPR). Residues 1 to 16 (MARRRRHRGPRRPRPP) form a required for nucleolar localization region. Disordered regions lie at residues 1 to 129 (MARR…FRLP) and 149 to 174 (RRAG…TPAT). Residues 24 to 35 (TAQSQVTSTPNS) are compositionally biased toward polar residues. The segment covering 45 to 58 (AAPPPPPAGGPPPS) has biased composition (pro residues). A compositionally biased stretch (acidic residues) spans 73–83 (ASDDDDDDDWP). Pro residues-rich tracts occupy residues 84–93 (DSPPPEPAPE) and 119–128 (SHPPSRPFRL). The Nuclear export signal signature appears at 128 to 137 (LPPRLALRLR). 5 consecutive repeat copies span residues 161-163 (ATP), 164-166 (ATP), 167-169 (ATP), 170-172 (ATP), and 173-175 (ATP). The 5 X 3 AA tandem repeats of A-T-P stretch occupies residues 161–175 (ATPATPATPATPATP). The segment covering 164–174 (ATPATPATPAT) has biased composition (low complexity). Residues 175–188 (PARVRFSPHVRVRH) form a binding to PP1CA region. Residues 175 to 188 (PARVRFSPHVRVRH) form an interaction with host PPP1CA region. The tract at residues 190-248 (VVWASAARLARRGSWARERADRARFRRRVAEAEAVIGPCLGPEARARALARGAGPANSV) is important for interferon resistance. The Bipartite nuclear localization signal motif lies at 200-218 (RRGSWARERADRARFRRRV). Residues 218–233 (VAEAEAVIGPCLGPEA) are interaction with host EIF2S1/EIF-2ALPHA.

The protein belongs to the PPP1R15 family. As to quaternary structure, interacts with host PPP1CA; this interaction forms a high-molecular-weight complex that dephosphorylates EIF2S1/eIF-2alpha. Interacts with host EIF2S1/eIF-2alpha; this interaction is crucial for the specific dephosphorylation of EIF2S1/eIF-2alpha by PPP1CA. Binds to proliferating cell nuclear antigen (PCNA), which may release host cells from growth arrest and facilitate viral replication. Interacts (via N-terminus) with host C1QBP; this interaction allows C1QBP to be recruited to the inner nuclear membrane by ICP34.5. Interacts with host PRKCA. Interacts with protein UL31. Interacts with host STING/TMEM173; this interaction inhibits the intracellular DNA sensing pathway. Interacts with host BECN1; this interaction modulates host autophagy.

Its subcellular location is the host cytoplasm. It localises to the host nucleus. It is found in the host nucleolus. The protein resides in the virion. Inhibits the establishment of the immune response and of the integrated stress response (ISR) in the infected cell. Plays essential roles in viral nuclear egress to mediate capsid transit across the nuclear membrane. Facilitates nuclear egress cooperatively with host C1QBP and protein kinase C/PKC to induce lamin A/C phosphorylation and subsequent reorganization. In turn, lamina disassembles and nuclear egress occurs. Recruits the serine/threonine protein phosphatase PPP1CA/PP1-alpha to dephosphorylate the translation initiation factor EIF2S1/eIF-2alpha, thereby couteracting the host shutoff of protein synthesis involving double-stranded RNA-dependent protein kinase EIF2AK2/PKR. In turn, controls host IRF3 activation and subsequently inhibits host interferon response. Controls the DNA sensing pathway by interacting with and inhibiting host STING/TMEM173. Also down-modulates the host MHC class II proteins cell surface expression. Acts as a neurovirulence factor that has a profound effect on the growth of the virus in central nervous system tissue, by interacting with host BECN1 and thereby antagonizing the host autophagy response. The protein is Neurovirulence factor ICP34.5 (ICP34.5) of Homo sapiens (Human).